The following is a 150-amino-acid chain: Large ribosomal subunit protein uL15 (150 aa).

Polar residues predominate over residues 1 to 15 (MNLSNLQPAEGSTHN). The segment at 1 to 52 (MNLSNLQPAEGSTHNQNKRLGRGEGSGKGGTSARGHKGAKSRSGYSKKIGFE) is disordered. A compositionally biased stretch (gly residues) spans 23-32 (GEGSGKGGTS).

Belongs to the universal ribosomal protein uL15 family. In terms of assembly, part of the 50S ribosomal subunit.

Functionally, binds to the 23S rRNA. The protein is Large ribosomal subunit protein uL15 of Flavobacterium psychrophilum (strain ATCC 49511 / DSM 21280 / CIP 103535 / JIP02/86).